The primary structure comprises 778 residues: Jhy protein homolog (778 aa).

Disordered regions lie at residues 62–271, 334–408, 631–654, and 721–746; these read DRIR…PKTD, QYES…LDTS, EKGKKHKKRSSSKNTKLKGYQKRD, and IPKPKPSNLTHQASKEQKNPTYAGKE. Residues 118-139 are compositionally biased toward basic and acidic residues; it reads PIEDKYSDLRYDPNWKSKKEEG. Positions 223–234 are enriched in low complexity; that stretch reads SSLSPYVKSSSS. The segment covering 334-344 has biased composition (polar residues); sequence QYESTKSSNVP. A compositionally biased stretch (basic residues) spans 358-371; the sequence is SRRPAKLKIRKQCK. The span at 375-389 shows a compositional bias: polar residues; sequence GLKSSTTEEVTASQG. Residues 390–402 are compositionally biased toward low complexity; sequence NQNNPPRQQQNQN. A compositionally biased stretch (basic residues) spans 633–650; that stretch reads GKKHKKRSSSKNTKLKGY. Positions 733–746 are enriched in basic and acidic residues; it reads ASKEQKNPTYAGKE.

Its function is as follows. Required for the normal development of cilia in brain ependymal cells lining the ventricular surfaces. This chain is Jhy protein homolog, found in Homo sapiens (Human).